Reading from the N-terminus, the 234-residue chain is Small ribosomal subunit protein uS3 (234 aa).

Positions 39 to 108 (IRKFVKKKLF…TVIVNVVEVK (70 aa)) constitute a KH type-2 domain. A disordered region spans residues 212 to 234 (KGKNEETNNETADNSRGRRREAK).

The protein belongs to the universal ribosomal protein uS3 family. Part of the 30S ribosomal subunit. Forms a tight complex with proteins S10 and S14.

Functionally, binds the lower part of the 30S subunit head. Binds mRNA in the 70S ribosome, positioning it for translation. This is Small ribosomal subunit protein uS3 from Alkaliphilus metalliredigens (strain QYMF).